Reading from the N-terminus, the 252-residue chain is Endonuclease NucS (252 aa).

The protein belongs to the NucS endonuclease family.

It is found in the cytoplasm. Functionally, cleaves both 3' and 5' ssDNA extremities of branched DNA structures. This is Endonuclease NucS from Thermococcus kodakarensis (strain ATCC BAA-918 / JCM 12380 / KOD1) (Pyrococcus kodakaraensis (strain KOD1)).